Here is a 95-residue protein sequence, read N- to C-terminus: Aspartyl/glutamyl-tRNA(Asn/Gln) amidotransferase subunit C (95 aa).

The protein belongs to the GatC family. As to quaternary structure, heterotrimer of A, B and C subunits.

The enzyme catalyses L-glutamyl-tRNA(Gln) + L-glutamine + ATP + H2O = L-glutaminyl-tRNA(Gln) + L-glutamate + ADP + phosphate + H(+). It catalyses the reaction L-aspartyl-tRNA(Asn) + L-glutamine + ATP + H2O = L-asparaginyl-tRNA(Asn) + L-glutamate + ADP + phosphate + 2 H(+). Functionally, allows the formation of correctly charged Asn-tRNA(Asn) or Gln-tRNA(Gln) through the transamidation of misacylated Asp-tRNA(Asn) or Glu-tRNA(Gln) in organisms which lack either or both of asparaginyl-tRNA or glutaminyl-tRNA synthetases. The reaction takes place in the presence of glutamine and ATP through an activated phospho-Asp-tRNA(Asn) or phospho-Glu-tRNA(Gln). This is Aspartyl/glutamyl-tRNA(Asn/Gln) amidotransferase subunit C from Ruegeria pomeroyi (strain ATCC 700808 / DSM 15171 / DSS-3) (Silicibacter pomeroyi).